We begin with the raw amino-acid sequence, 58 residues long: Small ribosomal subunit protein bS21 (58 aa).

Basic and acidic residues predominate over residues Ile-32 to Ser-42. The segment at Ile-32–Lys-58 is disordered. A compositionally biased stretch (basic residues) spans Val-43–Lys-58.

The protein belongs to the bacterial ribosomal protein bS21 family.

This is Small ribosomal subunit protein bS21 from Lachnoclostridium phytofermentans (strain ATCC 700394 / DSM 18823 / ISDg) (Clostridium phytofermentans).